The sequence spans 85 residues: Large ribosomal subunit protein bL31B (85 aa).

Belongs to the bacterial ribosomal protein bL31 family. Type B subfamily. In terms of assembly, part of the 50S ribosomal subunit.

The polypeptide is Large ribosomal subunit protein bL31B (Pseudarthrobacter chlorophenolicus (strain ATCC 700700 / DSM 12829 / CIP 107037 / JCM 12360 / KCTC 9906 / NCIMB 13794 / A6) (Arthrobacter chlorophenolicus)).